Here is a 112-residue protein sequence, read N- to C-terminus: C-type natriuretic peptide 3 (112 aa).

An N-terminal signal peptide occupies residues 1–19 (MSLRAFMLCVCLLLQSVGA). Positions 20 to 90 (RPASELQNLE…SKRSWGRYKK (71 aa)) are excised as a propeptide. Residues 33–67 (QDQLSSTEHPEEDRLDRTREEPQLGGSSSREAADE) are disordered. Positions 40-54 (EHPEEDRLDRTREEP) are enriched in basic and acidic residues. A disulfide bond links C96 and C112.

Belongs to the natriuretic peptide family. As to expression, spinal cord, kidney, ovary, heart and spleen, and to a lower extent in brain and liver.

It localises to the secreted. Functionally, exhibits natriuretic and vasodepressant activity. Has cGMP-stimulating activity. May help to regulate body fluid homeostasis in a variety of aquatic environments. The protein is C-type natriuretic peptide 3 of Oryzias latipes (Japanese rice fish).